Here is a 420-residue protein sequence, read N- to C-terminus: Exodeoxyribonuclease 7 large subunit (420 aa).

Belongs to the XseA family. In terms of assembly, heterooligomer composed of large and small subunits.

It is found in the cytoplasm. It catalyses the reaction Exonucleolytic cleavage in either 5'- to 3'- or 3'- to 5'-direction to yield nucleoside 5'-phosphates.. Its function is as follows. Bidirectionally degrades single-stranded DNA into large acid-insoluble oligonucleotides, which are then degraded further into small acid-soluble oligonucleotides. The chain is Exodeoxyribonuclease 7 large subunit from Helicobacter pylori (strain HPAG1).